The primary structure comprises 130 residues: Small ribosomal subunit protein uS11 (130 aa).

Belongs to the universal ribosomal protein uS11 family. In terms of assembly, part of the 30S ribosomal subunit. Interacts with proteins S7 and S18. Binds to IF-3.

In terms of biological role, located on the platform of the 30S subunit, it bridges several disparate RNA helices of the 16S rRNA. Forms part of the Shine-Dalgarno cleft in the 70S ribosome. In Campylobacter curvus (strain 525.92), this protein is Small ribosomal subunit protein uS11.